The following is a 466-amino-acid chain: tRNA-2-methylthio-N(6)-dimethylallyladenosine synthase (466 aa).

The MTTase N-terminal domain occupies 5–125 (RKLHIKSYGC…LPELLARAGR (121 aa)). [4Fe-4S] cluster-binding residues include Cys-14, Cys-50, Cys-88, Cys-166, Cys-170, and Cys-173. Residues 152 to 384 (RARGVSAFVT…QSLIDSQQAA (233 aa)) enclose the Radical SAM core domain. One can recognise a TRAM domain in the interval 387 to 449 (KAAIGTVVDV…RYSLLGELVA (63 aa)).

This sequence belongs to the methylthiotransferase family. MiaB subfamily. In terms of assembly, monomer. [4Fe-4S] cluster serves as cofactor.

Its subcellular location is the cytoplasm. It catalyses the reaction N(6)-dimethylallyladenosine(37) in tRNA + (sulfur carrier)-SH + AH2 + 2 S-adenosyl-L-methionine = 2-methylsulfanyl-N(6)-dimethylallyladenosine(37) in tRNA + (sulfur carrier)-H + 5'-deoxyadenosine + L-methionine + A + S-adenosyl-L-homocysteine + 2 H(+). Functionally, catalyzes the methylthiolation of N6-(dimethylallyl)adenosine (i(6)A), leading to the formation of 2-methylthio-N6-(dimethylallyl)adenosine (ms(2)i(6)A) at position 37 in tRNAs that read codons beginning with uridine. The chain is tRNA-2-methylthio-N(6)-dimethylallyladenosine synthase from Bradyrhizobium sp. (strain BTAi1 / ATCC BAA-1182).